The following is a 502-amino-acid chain: Lysine--tRNA ligase (502 aa).

Residues Glu-413 and Glu-420 each contribute to the Mg(2+) site.

This sequence belongs to the class-II aminoacyl-tRNA synthetase family. Homodimer. Mg(2+) serves as cofactor.

The protein resides in the cytoplasm. The enzyme catalyses tRNA(Lys) + L-lysine + ATP = L-lysyl-tRNA(Lys) + AMP + diphosphate. In Haemophilus influenzae (strain PittGG), this protein is Lysine--tRNA ligase.